A 404-amino-acid chain; its full sequence is Argininosuccinate synthase (404 aa).

Residues 11–19 and A38 contribute to the ATP site; that span reads AYSGGLDTS. Positions 91 and 96 each coordinate L-citrulline. G121 is an ATP binding site. Residues T123, N127, and D128 each coordinate L-aspartate. N127 provides a ligand contact to L-citrulline. Residues R131, S182, S191, E267, and Y279 each contribute to the L-citrulline site.

It belongs to the argininosuccinate synthase family. Type 1 subfamily. As to quaternary structure, homotetramer.

It is found in the cytoplasm. The enzyme catalyses L-citrulline + L-aspartate + ATP = 2-(N(omega)-L-arginino)succinate + AMP + diphosphate + H(+). It functions in the pathway amino-acid biosynthesis; L-arginine biosynthesis; L-arginine from L-ornithine and carbamoyl phosphate: step 2/3. This Paramagnetospirillum magneticum (strain ATCC 700264 / AMB-1) (Magnetospirillum magneticum) protein is Argininosuccinate synthase.